The following is a 523-amino-acid chain: 2-isopropylmalate synthase (523 aa).

One can recognise a Pyruvate carboxyltransferase domain in the interval 5–267; that stretch reads VIIFDTTLRD…HTRINHQEIW (263 aa). Residues aspartate 14, histidine 202, histidine 204, and asparagine 238 each contribute to the Mn(2+) site. Residues 392–523 form a regulatory domain region; it reads RLDYFSVQSG…QNKENNKETV (132 aa).

This sequence belongs to the alpha-IPM synthase/homocitrate synthase family. LeuA type 1 subfamily. In terms of assembly, homodimer. Requires Mn(2+) as cofactor.

It localises to the cytoplasm. It catalyses the reaction 3-methyl-2-oxobutanoate + acetyl-CoA + H2O = (2S)-2-isopropylmalate + CoA + H(+). The protein operates within amino-acid biosynthesis; L-leucine biosynthesis; L-leucine from 3-methyl-2-oxobutanoate: step 1/4. In terms of biological role, catalyzes the condensation of the acetyl group of acetyl-CoA with 3-methyl-2-oxobutanoate (2-ketoisovalerate) to form 3-carboxy-3-hydroxy-4-methylpentanoate (2-isopropylmalate). This chain is 2-isopropylmalate synthase, found in Citrobacter koseri (strain ATCC BAA-895 / CDC 4225-83 / SGSC4696).